We begin with the raw amino-acid sequence, 188 residues long: Large ribosomal subunit protein eL18 (188 aa).

The interval 147-188 is disordered; that stretch reads EAEKHFGPAPGVPHSHTKPYVRSKGRKFERARGRRASRAYKN. Basic residues-rich tracts occupy residues 161 to 171 and 178 to 188; these read SHTKPYVRSKG and RGRRASRAYKN.

This sequence belongs to the eukaryotic ribosomal protein eL18 family.

It is found in the cytoplasm. This Caenorhabditis elegans protein is Large ribosomal subunit protein eL18 (rpl-18).